The chain runs to 218 residues: Thiopurine S-methyltransferase (218 aa).

S-adenosyl-L-methionine is bound by residues Trp10, Leu45, Glu66, and Arg123.

The protein belongs to the class I-like SAM-binding methyltransferase superfamily. TPMT family.

The protein resides in the cytoplasm. The catalysed reaction is S-adenosyl-L-methionine + a thiopurine = S-adenosyl-L-homocysteine + a thiopurine S-methylether.. In Pseudomonas aeruginosa (strain LESB58), this protein is Thiopurine S-methyltransferase.